The primary structure comprises 286 residues: MNFGIVVNISREQALHLARTLATWFDERHIGYMFETLSGSTLGLGPSAPIEELNCHCDVFISLGGDGTLLFTSHHAVTKPVIGINVGYLGFLAEFTQSEMFAAVEKVLSGNYSLHTRSQLEATAFMDGVSHQFRALNDAVLEKGTYPRIPAFIIKLDGELLSAYRADGIIIATSTGSTAYSMSAGGPIIAPKSSVFVITPICPHMLTVRPIVISDDKVIEISVDAPDGEFPLNCDGSLKKMLAPHECITIKKSPVAINLVANEKRNYGEILRTKLLWGREHDGCCS.

D66 serves as the catalytic Proton acceptor. Residues 66–67, 137–138, R148, R165, D167, and 178–183 contribute to the NAD(+) site; these read DG, ND, and TAYSMS.

The protein belongs to the NAD kinase family. The cofactor is a divalent metal cation.

The protein localises to the cytoplasm. The catalysed reaction is NAD(+) + ATP = ADP + NADP(+) + H(+). Involved in the regulation of the intracellular balance of NAD and NADP, and is a key enzyme in the biosynthesis of NADP. Catalyzes specifically the phosphorylation on 2'-hydroxyl of the adenosine moiety of NAD to yield NADP. The chain is NAD kinase from Chlorobium chlorochromatii (strain CaD3).